We begin with the raw amino-acid sequence, 93 residues long: Phosphoribosyl-ATP pyrophosphatase (93 aa).

It belongs to the PRA-PH family.

It is found in the cytoplasm. The catalysed reaction is 1-(5-phospho-beta-D-ribosyl)-ATP + H2O = 1-(5-phospho-beta-D-ribosyl)-5'-AMP + diphosphate + H(+). Its pathway is amino-acid biosynthesis; L-histidine biosynthesis; L-histidine from 5-phospho-alpha-D-ribose 1-diphosphate: step 2/9. The chain is Phosphoribosyl-ATP pyrophosphatase from Rhodococcus jostii (strain RHA1).